The chain runs to 1342 residues: DNA-directed RNA polymerase subunit beta (1342 aa).

This sequence belongs to the RNA polymerase beta chain family. The RNAP catalytic core consists of 2 alpha, 1 beta, 1 beta' and 1 omega subunit. When a sigma factor is associated with the core the holoenzyme is formed, which can initiate transcription.

The catalysed reaction is RNA(n) + a ribonucleoside 5'-triphosphate = RNA(n+1) + diphosphate. Functionally, DNA-dependent RNA polymerase catalyzes the transcription of DNA into RNA using the four ribonucleoside triphosphates as substrates. This is DNA-directed RNA polymerase subunit beta from Histophilus somni (strain 2336) (Haemophilus somnus).